A 202-amino-acid chain; its full sequence is uncharacterized protein (202 aa).

Residues 118–202 (SSVSPVSSKK…KVSGTKKVKA (85 aa)) are disordered. At Ser-121 the chain carries Phosphoserine. Composition is skewed to basic residues over residues 142–163 (EKSK…KSKR) and 186–202 (SSKS…KVKA).

Its subcellular location is the nucleus. It localises to the nucleolus. This is an uncharacterized protein from Schizosaccharomyces pombe (strain 972 / ATCC 24843) (Fission yeast).